Reading from the N-terminus, the 403-residue chain is Probable eukaryotic initiation factor 4A (403 aa).

Positions 1–29 (MSQQDRVAPQDQDSFLDDQPGVRPIPSFD) are disordered. Residues 26–54 (PSFDDMPLHQNLLRGIYSYGFEKPSSIQQ) carry the Q motif motif. A Helicase ATP-binding domain is found at 57-230 (IAPFTRGGDI…KKFMRDPVRI (174 aa)). 70 to 77 (AQSGTGKT) provides a ligand contact to ATP. The short motif at 178-181 (DEAD) is the DEAD box element. Residues 241-401 (GIKQFFIAVE…ELPVDFAAYL (161 aa)) enclose the Helicase C-terminal domain.

This sequence belongs to the DEAD box helicase family. eIF4A subfamily. As to quaternary structure, eIF4F is a multi-subunit complex, the composition of which varies with external and internal environmental conditions. It is composed of at least EIF4A, EIF4E and EIF4G.

The enzyme catalyses ATP + H2O = ADP + phosphate + H(+). Functionally, ATP-dependent RNA helicase which is a subunit of the eIF4F complex involved in cap recognition and is required for mRNA binding to ribosome. In the current model of translation initiation, eIF4A unwinds RNA secondary structures in the 5'-UTR of mRNAs which is necessary to allow efficient binding of the small ribosomal subunit, and subsequent scanning for the initiator codon. The protein is Probable eukaryotic initiation factor 4A of Leishmania braziliensis.